The following is a 595-amino-acid chain: UvrABC system protein C (595 aa).

One can recognise a GIY-YIG domain in the interval 14–91; that stretch reads SNPGCYLHKD…IQENMPKFNI (78 aa). In terms of domain architecture, UVR spans 196 to 231; sequence DKIVNQLKAKMKDMSDQMAFERAAEYRDLIEAVSTL.

Belongs to the UvrC family. As to quaternary structure, interacts with UvrB in an incision complex.

Its subcellular location is the cytoplasm. The UvrABC repair system catalyzes the recognition and processing of DNA lesions. UvrC both incises the 5' and 3' sides of the lesion. The N-terminal half is responsible for the 3' incision and the C-terminal half is responsible for the 5' incision. The protein is UvrABC system protein C of Streptococcus thermophilus (strain ATCC BAA-491 / LMD-9).